Consider the following 476-residue polypeptide: uncharacterized protein (476 aa).

A coiled-coil region spans residues Asp147–Asn204.

This is an uncharacterized protein from Mycolicibacterium smegmatis (strain ATCC 700084 / mc(2)155) (Mycobacterium smegmatis).